A 212-amino-acid chain; its full sequence is Protein-L-isoaspartate O-methyltransferase (212 aa).

Ser-60 is a catalytic residue.

The protein belongs to the methyltransferase superfamily. L-isoaspartyl/D-aspartyl protein methyltransferase family.

Its subcellular location is the cytoplasm. The enzyme catalyses [protein]-L-isoaspartate + S-adenosyl-L-methionine = [protein]-L-isoaspartate alpha-methyl ester + S-adenosyl-L-homocysteine. In terms of biological role, catalyzes the methyl esterification of L-isoaspartyl residues in peptides and proteins that result from spontaneous decomposition of normal L-aspartyl and L-asparaginyl residues. It plays a role in the repair and/or degradation of damaged proteins. The sequence is that of Protein-L-isoaspartate O-methyltransferase from Pseudomonas entomophila (strain L48).